A 384-amino-acid chain; its full sequence is Lipid-A-disaccharide synthase (384 aa).

Belongs to the LpxB family.

It catalyses the reaction a lipid X + a UDP-2-N,3-O-bis[(3R)-3-hydroxyacyl]-alpha-D-glucosamine = a lipid A disaccharide + UDP + H(+). The protein operates within bacterial outer membrane biogenesis; LPS lipid A biosynthesis. Condensation of UDP-2,3-diacylglucosamine and 2,3-diacylglucosamine-1-phosphate to form lipid A disaccharide, a precursor of lipid A, a phosphorylated glycolipid that anchors the lipopolysaccharide to the outer membrane of the cell. The polypeptide is Lipid-A-disaccharide synthase (Cellvibrio japonicus (strain Ueda107) (Pseudomonas fluorescens subsp. cellulosa)).